The sequence spans 986 residues: Vacuolar membrane protease (986 aa).

Topologically, residues 1–20 (MATPRAQKFNPIAFTPGPVT) are cytoplasmic. Residues 21-41 (LITTIVYLALLIPILVISLVV) form a helical membrane-spanning segment. At 42 to 392 (PPAPETSPEG…AFAVFRLHTL (351 aa)) the chain is on the vacuolar side. 3 N-linked (GlcNAc...) asparagine glycosylation sites follow: Asn53, Asn116, and Asn119. 2 residues coordinate Zn(2+): His175 and Asp187. The Proton acceptor role is filled by Glu221. Glu222 is a binding site for Zn(2+). Residue Asn238 is glycosylated (N-linked (GlcNAc...) asparagine). Zn(2+) is bound by residues Glu247 and His320. A helical transmembrane segment spans residues 393–413 (FALSVTLLIVAPLVIFITAIV). The Cytoplasmic segment spans residues 414–447 (LSKTDRMYLFSMSKSLGGTDERVSLRGLRGLFRT). Residues 448–468 (PIILAVATVIPIGLAYLLEKV) form a helical membrane-spanning segment. The Vacuolar segment spans residues 469–477 (NPYIVHSSQ). A helical membrane pass occupies residues 478-498 (FSVWSMMISVWIFLAWFLACA). Over 499–509 (ADFFRPSALHR) the chain is Cytoplasmic. The helical transmembrane segment at 510–530 (AYSYTWIFIATWVMLVINTVY) threads the bilayer. Residues 531 to 534 (ANQK) lie on the Vacuolar side of the membrane. The chain crosses the membrane as a helical span at residues 535 to 555 (GIAAGYFVFFYFSGSFLATWV). The Cytoplasmic portion of the chain corresponds to 556–665 (SYLELFALPR…WSWTLPRWTW (110 aa)). The interval 595-620 (ELPSDTGPHAEYPGDADETDPTESTS) is disordered. Residues 666–686 (VLQLLLLAPIVLILVGQLALF) form a helical membrane-spanning segment. The Vacuolar portion of the chain corresponds to 687–702 (LTTSMSQVGSDGVSTF). A helical membrane pass occupies residues 703–723 (IVYLACAVFTTLLFAPLFPFI). The Cytoplasmic portion of the chain corresponds to 724–729 (HRFTYH). The helical transmembrane segment at 730–750 (IPTFLFLVFVGTLIYNLVAFP) threads the bilayer. Topologically, residues 751 to 986 (FSPANRLKMF…VEASHGITIQ (236 aa)) are vacuolar. Residues Asn797, Asn840, and Asn948 are each glycosylated (N-linked (GlcNAc...) asparagine).

The protein belongs to the peptidase M28 family. Zn(2+) is required as a cofactor.

Its subcellular location is the vacuole membrane. Its function is as follows. May be involved in vacuolar sorting and osmoregulation. In Blastomyces gilchristii (strain SLH14081) (Blastomyces dermatitidis), this protein is Vacuolar membrane protease.